A 391-amino-acid chain; its full sequence is Galactokinase (391 aa).

34–37 (EHTD) serves as a coordination point for substrate. 121–127 (GAGLSSS) lines the ATP pocket. Positions 127 and 159 each coordinate Mg(2+). Residue D171 is the Proton acceptor of the active site. Residue Y220 participates in substrate binding.

This sequence belongs to the GHMP kinase family. GalK subfamily.

It localises to the cytoplasm. It carries out the reaction alpha-D-galactose + ATP = alpha-D-galactose 1-phosphate + ADP + H(+). Its pathway is carbohydrate metabolism; galactose metabolism. In terms of biological role, catalyzes the transfer of the gamma-phosphate of ATP to D-galactose to form alpha-D-galactose-1-phosphate (Gal-1-P). The polypeptide is Galactokinase (Roseiflexus sp. (strain RS-1)).